The following is a 304-amino-acid chain: tRNA dimethylallyltransferase (304 aa).

10–17 (GPTASGKT) lines the ATP pocket. 12-17 (TASGKT) provides a ligand contact to substrate. Interaction with substrate tRNA stretches follow at residues 35-38 (DSAL), 159-163 (QRLSR), and 240-245 (RCVGYR).

Belongs to the IPP transferase family. As to quaternary structure, monomer. Mg(2+) is required as a cofactor.

It carries out the reaction adenosine(37) in tRNA + dimethylallyl diphosphate = N(6)-dimethylallyladenosine(37) in tRNA + diphosphate. Its function is as follows. Catalyzes the transfer of a dimethylallyl group onto the adenine at position 37 in tRNAs that read codons beginning with uridine, leading to the formation of N6-(dimethylallyl)adenosine (i(6)A). In Shewanella sp. (strain W3-18-1), this protein is tRNA dimethylallyltransferase.